The following is a 100-amino-acid chain: Ubiquitin-related modifier 1 homolog (100 aa).

G100 is subject to 1-thioglycine. A Glycyl lysine isopeptide (Gly-Lys) (interchain with K-? in acceptor proteins) cross-link involves residue G100.

Belongs to the URM1 family. As to quaternary structure, interacts with cer. In terms of processing, C-terminal thiocarboxylation occurs in 2 steps, it is first acyl-adenylated (-COAMP) via the hesA/moeB/thiF part of the MOCS3 homolog, then thiocarboxylated (-COSH) via the rhodanese domain of the MOCS3 homolog.

The protein resides in the cytoplasm. The protein operates within tRNA modification; 5-methoxycarbonylmethyl-2-thiouridine-tRNA biosynthesis. In terms of biological role, acts as a sulfur carrier required for 2-thiolation of mcm(5)S(2)U at tRNA wobble positions of cytosolic tRNA(Lys), tRNA(Glu) and tRNA(Gln). Serves as sulfur donor in tRNA 2-thiolation reaction by being thiocarboxylated (-COSH) at its C-terminus by MOCS3. The sulfur is then transferred to tRNA to form 2-thiolation of mcm(5)S(2)U. Also acts as a ubiquitin-like protein (UBL) that is covalently conjugated via an isopeptide bond to lysine residues of target proteins such as Prx2/Jafrac1, Ciao1, Eip71CD and GILT1. The thiocarboxylated form serves as substrate for conjugation and oxidative stress specifically induces the formation of UBL-protein conjugates. The polypeptide is Ubiquitin-related modifier 1 homolog (Drosophila willistoni (Fruit fly)).